The following is a 93-amino-acid chain: Phosphoribosyl-ATP pyrophosphatase (93 aa).

This sequence belongs to the PRA-PH family.

It is found in the cytoplasm. It carries out the reaction 1-(5-phospho-beta-D-ribosyl)-ATP + H2O = 1-(5-phospho-beta-D-ribosyl)-5'-AMP + diphosphate + H(+). Its pathway is amino-acid biosynthesis; L-histidine biosynthesis; L-histidine from 5-phospho-alpha-D-ribose 1-diphosphate: step 2/9. This Mycolicibacterium paratuberculosis (strain ATCC BAA-968 / K-10) (Mycobacterium paratuberculosis) protein is Phosphoribosyl-ATP pyrophosphatase.